We begin with the raw amino-acid sequence, 364 residues long: Probable dual-specificity RNA methyltransferase RlmN (364 aa).

The active-site Proton acceptor is the glutamate 107. A Radical SAM core domain is found at 113-346; it reads HDYGNSVCVT…ATIRREQGSD (234 aa). Cysteine 120 and cysteine 351 are oxidised to a cystine. Residues cysteine 127, cysteine 131, and cysteine 134 each coordinate [4Fe-4S] cluster. Residues 177–178, serine 209, 232–234, and asparagine 308 each bind S-adenosyl-L-methionine; these read GE and SLH. The active-site S-methylcysteine intermediate is cysteine 351.

It belongs to the radical SAM superfamily. RlmN family. It depends on [4Fe-4S] cluster as a cofactor.

The protein resides in the cytoplasm. It catalyses the reaction adenosine(2503) in 23S rRNA + 2 reduced [2Fe-2S]-[ferredoxin] + 2 S-adenosyl-L-methionine = 2-methyladenosine(2503) in 23S rRNA + 5'-deoxyadenosine + L-methionine + 2 oxidized [2Fe-2S]-[ferredoxin] + S-adenosyl-L-homocysteine. The enzyme catalyses adenosine(37) in tRNA + 2 reduced [2Fe-2S]-[ferredoxin] + 2 S-adenosyl-L-methionine = 2-methyladenosine(37) in tRNA + 5'-deoxyadenosine + L-methionine + 2 oxidized [2Fe-2S]-[ferredoxin] + S-adenosyl-L-homocysteine. Its function is as follows. Specifically methylates position 2 of adenine 2503 in 23S rRNA and position 2 of adenine 37 in tRNAs. Confers resistance to some classes of antibiotics. The chain is Probable dual-specificity RNA methyltransferase RlmN from Staphylococcus haemolyticus (strain JCSC1435).